Consider the following 465-residue polypeptide: MELLDMNSMAASIGVSVAVLRFLLCFVATIPISFLWRFIPSRLGKHIYSAASGAFLSYLSFGFSSNLHFLVPMTIGYASMAIYRPLSGFITFFLGFAYLIGCHVFYMSGDAWKEGGIDSTGALMVLTLKVISCSINYNDGMLKEEGLREAQKKNRLIQMPSLIEYFGYCLCCGSHFAGPVFEMKDYLEWTEEKGIWAVSEKGKRPSPYGAMIRAVFQAAICMALYLYLVPQFPLTRFTEPVYQEWGFLKRFGYQYMAGFTARWKYYFIWSISEASIIISGLGFSGWTDETQTKAKWDRAKNVDILGVELAKSAVQIPLFWNIQVSTWLRHYVYERIVKPGKKAGFFQLLATQTVSAVWHGLYPGYIIFFVQSALMIDGSKAIYRWQQAIPPKMAMLRNVLVLINFLYTVVVLNYSSVGFMVLSLHETLVAFKSVYYIGTVIPIAVLLLSYLVPVKPVRPKTRKEE.

Helical transmembrane passes span 15 to 35, 55 to 75, 86 to 106, 161 to 181, 214 to 234, 266 to 286, 356 to 376, 399 to 419, and 434 to 454; these read VSVA…ISFL, FLSY…PMTI, LSGF…HVFY, SLIE…GPVF, AVFQ…QFPL, YFIW…FSGW, AVWH…ALMI, VLVL…SVGF, and VYYI…LVPV. His-359 is an active-site residue.

It belongs to the membrane-bound acyltransferase family. As to quaternary structure, interacts with GPAT9 and DGAT1. In terms of tissue distribution, expressed in rosette leaves, pollen grains, developing embryos and developing seeds.

The protein localises to the endoplasmic reticulum membrane. The enzyme catalyses a 1-acyl-sn-glycero-3-phosphocholine + an acyl-CoA = a 1,2-diacyl-sn-glycero-3-phosphocholine + CoA. It carries out the reaction 1-(9Z-octadecenoyl)-sn-glycero-3-phosphocholine + (9Z)-octadecenoyl-CoA = 1,2-di-(9Z-octadecenoyl)-sn-glycero-3-phosphocholine + CoA. It catalyses the reaction 1-(9Z-octadecenoyl)-sn-glycero-3-phosphocholine + (9Z,12Z)-octadecadienoyl-CoA = 1-(9Z)-octadecenoyl-2-(9Z,12Z)-octadecadienoyl-sn-glycero-3-phosphocholine + CoA. The catalysed reaction is (9Z,12Z,15Z)-octadecatrienoyl-CoA + 1-(9Z-octadecenoyl)-sn-glycero-3-phosphocholine = 1-(9Z-octadecaenoyl)-2-(9Z,12Z,15Z-octadecatrienoyl)-sn-glycero-3-phosphocholine + CoA. The enzyme catalyses a 1-acyl-sn-glycero-3-phosphoethanolamine + an acyl-CoA = a 1,2-diacyl-sn-glycero-3-phosphoethanolamine + CoA. It carries out the reaction a 1-acyl-sn-glycero-3-phospho-L-serine + an acyl-CoA = a 1,2-diacyl-sn-glycero-3-phospho-L-serine + CoA. In terms of biological role, lysophospholipid acyltransferase with broad specificity. Mediates the conversion of lysophosphatidylethanolamine (1-acyl-sn-glycero-3-phosphoethanolamine or LPE) into phosphatidylethanolamine (1,2-diacyl-sn-glycero-3-phosphoethanolamine or PE) (LPEAT activity). Catalyzes the acylation of lysophosphatidylserine (1-acyl-2-hydroxy-sn-glycero-3-phospho-L-serine or LPS) into phosphatidylserine (1,2-diacyl-sn-glycero-3-phospho-L-serine or PS) (LPSAT activity). Can convert lysophosphatidylcholine (1-acyl-sn-glycero-3-phosphocholine or LPC) into phosphatidylcholine (1,2-diacyl-sn-glycero-3-phosphocholine or PC) (LPCAT activity). Exhibits preference for C18-unsaturated acyl-CoA when transferring an acyl group to lysophosphatidylcholine. Can also utilize lysophosphatidylglycerol (LPG) as substrate in vitro. Has neither activity towards lysophosphatidic acid (LPA) nor lysophosphatidylinositol (LPI). Lysophospholipid acyltransferases catalyze the reacylation step of the phospholipid remodeling pathway also known as the Lands cycle. The primary function of the Lands cycle is to provide a route for acyl remodeling to modify fatty acid (FA) composition of phospholipids derived from the Kennedy pathway. Is involved in PC acyl editing and phosphocholine headgroup exchange between PC and diacylglycerols. This processes control the majority of acyl fluxes through PC to provide polyunsaturated fatty acids for triacylglycerols synthesis in seeds. Involved with LPCAT1 in the direct incorporation of newly synthesized fatty acids exported form the chloroplast into PC through acyl editing. The chain is Lysophospholipid acyltransferase 2 from Arabidopsis thaliana (Mouse-ear cress).